The following is a 241-amino-acid chain: Lactate utilization protein C (241 aa).

The protein belongs to the LutC/YkgG family.

Is involved in L-lactate degradation and allows cells to grow with lactate as the sole carbon source. This Geobacillus sp. (strain WCH70) protein is Lactate utilization protein C.